A 118-amino-acid chain; its full sequence is MATTASPQALAHGRFVRGSVSKVRRVLDQIRGRSYRDALIMLEFMPYRSTGPITKVLRSAVANAEHNMGLDPSNLVVSMASADMGPTMKRYRPRAQGRAYQIKKQTCHISIGVTPQDA.

This sequence belongs to the universal ribosomal protein uL22 family. Part of the 50S ribosomal subunit.

Its function is as follows. This protein binds specifically to 23S rRNA; its binding is stimulated by other ribosomal proteins, e.g. L4, L17, and L20. It is important during the early stages of 50S assembly. It makes multiple contacts with different domains of the 23S rRNA in the assembled 50S subunit and ribosome. The globular domain of the protein is located near the polypeptide exit tunnel on the outside of the subunit, while an extended beta-hairpin is found that lines the wall of the exit tunnel in the center of the 70S ribosome. The polypeptide is Large ribosomal subunit protein uL22 (Synechococcus sp. (strain RCC307)).